Consider the following 242-residue polypeptide: Small ribosomal subunit protein uS3 (242 aa).

The KH type-2 domain occupies 39–110 (IRKFIHKKYG…QVRINVVEVE (72 aa)). Residues 216-242 (QPMPVGAAPRRRASRRPQQFEDRSNEG) form a disordered region. Basic and acidic residues predominate over residues 233-242 (QQFEDRSNEG).

It belongs to the universal ribosomal protein uS3 family. As to quaternary structure, part of the 30S ribosomal subunit. Forms a tight complex with proteins S10 and S14.

Binds the lower part of the 30S subunit head. Binds mRNA in the 70S ribosome, positioning it for translation. The chain is Small ribosomal subunit protein uS3 from Synechococcus sp. (strain CC9605).